A 558-amino-acid chain; its full sequence is Arginine--tRNA ligase (558 aa).

The 'HIGH' region signature appears at 129-139 (ANPTGPLHVGH).

The protein belongs to the class-I aminoacyl-tRNA synthetase family. In terms of assembly, monomer.

It localises to the cytoplasm. It carries out the reaction tRNA(Arg) + L-arginine + ATP = L-arginyl-tRNA(Arg) + AMP + diphosphate. In Polaromonas naphthalenivorans (strain CJ2), this protein is Arginine--tRNA ligase.